The chain runs to 383 residues: Probable acyl-CoA dehydrogenase YdiO (383 aa).

The protein belongs to the acyl-CoA dehydrogenase family. Requires FAD as cofactor.

The enzyme catalyses a 2,3-saturated acyl-CoA + A = a 2,3-dehydroacyl-CoA + AH2. This is Probable acyl-CoA dehydrogenase YdiO (ydiO) from Escherichia coli O157:H7.